A 308-amino-acid chain; its full sequence is Ribonuclease Z (308 aa).

7 residues coordinate Zn(2+): histidine 63, histidine 65, aspartate 67, histidine 68, histidine 141, aspartate 212, and histidine 270. The active-site Proton acceptor is aspartate 67.

This sequence belongs to the RNase Z family. Homodimer. Zn(2+) serves as cofactor.

It catalyses the reaction Endonucleolytic cleavage of RNA, removing extra 3' nucleotides from tRNA precursor, generating 3' termini of tRNAs. A 3'-hydroxy group is left at the tRNA terminus and a 5'-phosphoryl group is left at the trailer molecule.. Zinc phosphodiesterase, which displays some tRNA 3'-processing endonuclease activity. Probably involved in tRNA maturation, by removing a 3'-trailer from precursor tRNA. This chain is Ribonuclease Z, found in Pediococcus pentosaceus (strain ATCC 25745 / CCUG 21536 / LMG 10740 / 183-1w).